Here is a 392-residue protein sequence, read N- to C-terminus: Putative pectate lyase 21 (392 aa).

The first 21 residues, 1 to 21 (MSIVCTFFLFLLNTSFAFAFA), serve as a signal peptide directing secretion. Asparagine 38 is a glycosylation site (N-linked (GlcNAc...) asparagine). Residues aspartate 189, aspartate 213, and aspartate 217 each coordinate Ca(2+). N-linked (GlcNAc...) asparagine glycosylation is present at asparagine 220. Arginine 269 is an active-site residue.

This sequence belongs to the polysaccharide lyase 1 family. It depends on Ca(2+) as a cofactor.

It carries out the reaction Eliminative cleavage of (1-&gt;4)-alpha-D-galacturonan to give oligosaccharides with 4-deoxy-alpha-D-galact-4-enuronosyl groups at their non-reducing ends.. It functions in the pathway glycan metabolism; pectin degradation; 2-dehydro-3-deoxy-D-gluconate from pectin: step 2/5. This Arabidopsis thaliana (Mouse-ear cress) protein is Putative pectate lyase 21.